The chain runs to 447 residues: MKPVVALVGRPNVGKSTLFNRLTQTRDAIVADFAGLTRDRHYGNGRLGKHEFIVIDTGGFEPDAGSGIYKEMAKQTRQAVAEADVVIFVVDAREGLSAQDHDIANELRRLGKPCVLAANKAEGMHDGTKLVDFYELGFGDVHGVSAAHGQGMRDLVELALAPLNLPDPDDEADEDDVNKPIKLAVAGRPNVGKSTLINTWLGEERLVAFDLPGTTRDAISVPFERNGQRFELIDTAGLRRKGKVFEAIEKFSVVKTLQAIESASVVLLLLDATQGVTDQDAHIAGYILESGRAVVIAINKWDAVDSYQREQIQRQIETRLPFLKFASLHFISAIKRQGLGPVWQAIAQAHKSATRKMSTPVLTRLLLEAVQFQSPKRAGMFRPKLRYAHQGGMNPPVIIIHGNSLEHVTEAYKRFLEGRFRKEFDLVGTPLRIQFKSSQNPFADKDD.

2 consecutive EngA-type G domains span residues 3–167 (PVVA…NLPD) and 181–354 (IKLA…KSAT). Residues 9–16 (GRPNVGKS), 56–60 (DTGGF), 119–122 (NKAE), 187–194 (GRPNVGKS), 234–238 (DTAGL), and 299–302 (NKWD) contribute to the GTP site. Residues 355-439 (RKMSTPVLTR…PLRIQFKSSQ (85 aa)) enclose the KH-like domain.

Belongs to the TRAFAC class TrmE-Era-EngA-EngB-Septin-like GTPase superfamily. EngA (Der) GTPase family. Associates with the 50S ribosomal subunit.

In terms of biological role, GTPase that plays an essential role in the late steps of ribosome biogenesis. The protein is GTPase Der of Variovorax paradoxus (strain S110).